Reading from the N-terminus, the 61-residue chain is Photosystem II reaction center protein Z (61 aa).

The next 2 helical transmembrane spans lie at 5–25 (LTAL…VALA) and 38–58 (NKAF…DGIS).

Belongs to the PsbZ family. As to quaternary structure, PSII is composed of 1 copy each of membrane proteins PsbA, PsbB, PsbC, PsbD, PsbE, PsbF, PsbH, PsbI, PsbJ, PsbK, PsbL, PsbM, PsbT, PsbX, PsbY, PsbZ, Psb30/Ycf12, at least 3 peripheral proteins of the oxygen-evolving complex and a large number of cofactors. It forms dimeric complexes.

It localises to the plastid. Its subcellular location is the chloroplast thylakoid membrane. Its function is as follows. May control the interaction of photosystem II (PSII) cores with the light-harvesting antenna, regulates electron flow through the 2 photosystem reaction centers. PSII is a light-driven water plastoquinone oxidoreductase, using light energy to abstract electrons from H(2)O, generating a proton gradient subsequently used for ATP formation. The protein is Photosystem II reaction center protein Z of Skeletonema costatum (Marine centric diatom).